Reading from the N-terminus, the 336-residue chain is Eukaryotic translation initiation factor 3 subunit I (336 aa).

5 WD repeats span residues 8–47 (GHERSLNQIKFNRDGDLLFSVAKDKIVCAWWSANGERLGT), 50–91 (GHLG…KVWE), 146–185 (CTESKATVAGWSYLGKYIIAGHEDGSVSQYDAKTGEQLEN), 190–229 (EFDHQINDLQFSPDRTHFLTASKDKSAKLMSSRNLAILKT), and 287–326 (GHFGPLNTIHVHPAGTAYASGGEDGYVRVHHFDKPYFDFM).

This sequence belongs to the eIF-3 subunit I family. As to quaternary structure, component of the eukaryotic translation initiation factor 3 (eIF-3) complex.

It localises to the cytoplasm. Its function is as follows. Component of the eukaryotic translation initiation factor 3 (eIF-3) complex, which is involved in protein synthesis of a specialized repertoire of mRNAs and, together with other initiation factors, stimulates binding of mRNA and methionyl-tRNAi to the 40S ribosome. The eIF-3 complex specifically targets and initiates translation of a subset of mRNAs involved in cell proliferation. The polypeptide is Eukaryotic translation initiation factor 3 subunit I (tif34) (Emericella nidulans (strain FGSC A4 / ATCC 38163 / CBS 112.46 / NRRL 194 / M139) (Aspergillus nidulans)).